The sequence spans 560 residues: MFS-type transporter pgmG (560 aa).

A disordered region spans residues 1–32; the sequence is MSETVTQTETDQRPATARSLGAEEKEAKSDEQ. The span at 21-31 shows a compositional bias: basic and acidic residues; it reads GAEEKEAKSDE. The next 8 helical transmembrane spans lie at 45-65, 84-104, 111-131, 141-161, 174-194, 201-221, 242-262, and 275-295; these read FIVIISILSSVTLYSLDNTIV, WLSVAFLVACVATNSIWSKIY, WLYLFCVVLFEVGSAMCGAAP, ALAGLGGAGLYVGVMTLLSVN, TGLTWGVGTVLGPIVGGGFAV, WSFYINLFFAAVAIPIYLFML, LGTILMIGACVSGVMAINFGG, and CFVVSGVLFIVFGLQQWYCIG. Residue Asn300 is glycosylated (N-linked (GlcNAc...) asparagine). Residues 313 to 333 traverse the membrane as a helical segment; that stretch reads FIILFVQTASVATVFFVPIYF. A glycan (N-linked (GlcNAc...) asparagine) is linked at Asn343. The next 5 membrane-spanning stretches (helical) occupy residues 346–366, 378–398, 409–429, 440–460, and 515–535; these read AIDAGVRLLPLVCFIVAAMIL, MPWYLVGGCLSLVGSVLMYTI, GYMIILGVGGGMYAQASFAVA, VATGFISLAQLTGGTIALAIA, and ISQVYILPITGAAMSISLAIF.

The protein belongs to the major facilitator superfamily. TCR/Tet family.

The protein localises to the membrane. In terms of biological role, MFS-type transporter; part of the gene cluster that mediates the biosynthesis of pleosporalin A, ascomycone A, as well as a third cryptic naphthoquinone derived pigment, all responsible for the coloration of conidia. Seems not to be involved in pigment biosynthesis although its expression is regulated by the cluster-specific transcription factor pgmR. In Aspergillus terreus, this protein is MFS-type transporter pgmG.